A 223-amino-acid chain; its full sequence is Cytidylate kinase (223 aa).

G10–T18 is a binding site for ATP.

Belongs to the cytidylate kinase family. Type 1 subfamily.

The protein resides in the cytoplasm. It carries out the reaction CMP + ATP = CDP + ADP. It catalyses the reaction dCMP + ATP = dCDP + ADP. The chain is Cytidylate kinase from Streptococcus pneumoniae (strain Hungary19A-6).